A 370-amino-acid chain; its full sequence is Cytochrome b (370 aa).

4 helical membrane-spanning segments follow: residues 25 to 45 (FGSM…FLAV), 69 to 90 (WMMQ…YIHI), 105 to 125 (WLSG…GYVL), and 170 to 190 (FFAL…LHIL). 2 residues coordinate heme b: His75 and His89. Heme b contacts are provided by His174 and His188. His193 lines the a ubiquinone pocket. Transmembrane regions (helical) follow at residues 218–238 (YKDM…VSFF), 280–300 (LGGA…PFTH), 312–332 (LMQL…WTAT), and 339–358 (FTTI…ISNP).

Belongs to the cytochrome b family. The cytochrome bc1 complex contains 3 respiratory subunits (MT-CYB, CYC1 and UQCRFS1), 2 core proteins (UQCRC1 and UQCRC2) and probably 6 low-molecular weight proteins. Requires heme b as cofactor.

Its subcellular location is the mitochondrion inner membrane. Its function is as follows. Component of the ubiquinol-cytochrome c reductase complex (complex III or cytochrome b-c1 complex) that is part of the mitochondrial respiratory chain. The b-c1 complex mediates electron transfer from ubiquinol to cytochrome c. Contributes to the generation of a proton gradient across the mitochondrial membrane that is then used for ATP synthesis. This chain is Cytochrome b (MT-CYB), found in Chilabothrus strigilatus strigilatus (New Providence boa constrictor).